A 287-amino-acid chain; its full sequence is ATP synthase gamma chain (287 aa).

It belongs to the ATPase gamma chain family. F-type ATPases have 2 components, CF(1) - the catalytic core - and CF(0) - the membrane proton channel. CF(1) has five subunits: alpha(3), beta(3), gamma(1), delta(1), epsilon(1). CF(0) has three main subunits: a, b and c.

It localises to the cell inner membrane. In terms of biological role, produces ATP from ADP in the presence of a proton gradient across the membrane. The gamma chain is believed to be important in regulating ATPase activity and the flow of protons through the CF(0) complex. The sequence is that of ATP synthase gamma chain from Cronobacter sakazakii (strain ATCC BAA-894) (Enterobacter sakazakii).